We begin with the raw amino-acid sequence, 263 residues long: GTP cyclohydrolase 1 type 2 homolog (263 aa).

Residues histidine 76, histidine 77, aspartate 113, histidine 231, and glutamate 235 each coordinate a divalent metal cation.

The protein belongs to the GTP cyclohydrolase I type 2/NIF3 family. Homohexamer.

The protein is GTP cyclohydrolase 1 type 2 homolog of Deinococcus radiodurans (strain ATCC 13939 / DSM 20539 / JCM 16871 / CCUG 27074 / LMG 4051 / NBRC 15346 / NCIMB 9279 / VKM B-1422 / R1).